Reading from the N-terminus, the 257-residue chain is uncharacterized protein (257 aa).

A helical membrane pass occupies residues 6 to 26 (IFWLNLAAIIIISIVVSGGMF).

Belongs to the staphylococcal tandem lipoprotein family.

It localises to the cell membrane. This is an uncharacterized protein from Staphylococcus aureus (strain N315).